An 890-amino-acid polypeptide reads, in one-letter code: Serine/threonine-protein kinase D3 (890 aa).

Phosphoserine is present on residues serine 6, serine 27, serine 37, serine 41, and serine 44. The Phorbol-ester/DAG-type 1 zinc-finger motif lies at proline 154–cysteine 204. Phosphoserine is present on residues serine 213 and serine 216. The Phorbol-ester/DAG-type 2 zinc finger occupies proline 271–cysteine 321. Positions serine 332–phenylalanine 371 are disordered. A phosphoserine mark is found at serine 364, serine 391, and serine 395. Residues threonine 416 to methionine 532 enclose the PH domain. The residue at position 426 (tyrosine 426) is a Phosphotyrosine. Residue serine 442 is modified to Phosphoserine. A Phosphotyrosine modification is found at tyrosine 457. At threonine 535 the chain carries Phosphothreonine. Residue serine 539 is modified to Phosphoserine. A Protein kinase domain is found at isoleucine 576–leucine 832. ATP contacts are provided by residues leucine 582–valine 590 and lysine 605. Aspartate 699 functions as the Proton acceptor in the catalytic mechanism. Position 731 is a phosphoserine; by PKC (serine 731). Serine 735 is subject to Phosphoserine; by autocatalysis. Tyrosine 742 is subject to Phosphotyrosine.

This sequence belongs to the protein kinase superfamily. CAMK Ser/Thr protein kinase family. PKD subfamily. Mg(2+) serves as cofactor. Ubiquitous.

The protein resides in the cytoplasm. It localises to the membrane. The catalysed reaction is L-seryl-[protein] + ATP = O-phospho-L-seryl-[protein] + ADP + H(+). It carries out the reaction L-threonyl-[protein] + ATP = O-phospho-L-threonyl-[protein] + ADP + H(+). Its activity is regulated as follows. Activated by DAG and phorbol esters. Phorbol-ester/DAG-type domains 1 and 2 bind both DAG and phorbol ester with high affinity and mediate translocation to the cell membrane. Autophosphorylation of Ser-735 and phosphorylation of Ser-731 by PKC relieves auto-inhibition by the PH domain. In terms of biological role, converts transient diacylglycerol (DAG) signals into prolonged physiological effects, downstream of PKC. Involved in resistance to oxidative stress. The sequence is that of Serine/threonine-protein kinase D3 (PRKD3) from Homo sapiens (Human).